The primary structure comprises 430 residues: Histidine--tRNA ligase (430 aa).

This sequence belongs to the class-II aminoacyl-tRNA synthetase family. As to quaternary structure, homodimer.

It is found in the cytoplasm. The catalysed reaction is tRNA(His) + L-histidine + ATP = L-histidyl-tRNA(His) + AMP + diphosphate + H(+). The chain is Histidine--tRNA ligase (hisS) from Chlamydia pneumoniae (Chlamydophila pneumoniae).